The following is a 262-amino-acid chain: Cytochrome c oxidase subunit 3 (262 aa).

A run of 6 helical transmembrane segments spans residues 39 to 59, 83 to 103, 120 to 140, 163 to 183, 201 to 221, and 240 to 260; these read YTMTLFILGNIITILTMYQWW, GMILFIVSEIFFFISFFWAFF, VGIIAFNPFQIPLLNTAILLA, GLFFTIVLGIYFSILQAYEYI, ATGFHGLHVLIGTTFLLICFL, and AWYWHFVDVVWLFLYISIYWW.

Belongs to the cytochrome c oxidase subunit 3 family. As to quaternary structure, component of the cytochrome c oxidase (complex IV, CIV), a multisubunit enzyme composed of a catalytic core of 3 subunits and several supernumerary subunits. The complex exists as a monomer or a dimer and forms supercomplexes (SCs) in the inner mitochondrial membrane with ubiquinol-cytochrome c oxidoreductase (cytochrome b-c1 complex, complex III, CIII).

The protein resides in the mitochondrion inner membrane. It catalyses the reaction 4 Fe(II)-[cytochrome c] + O2 + 8 H(+)(in) = 4 Fe(III)-[cytochrome c] + 2 H2O + 4 H(+)(out). Functionally, component of the cytochrome c oxidase, the last enzyme in the mitochondrial electron transport chain which drives oxidative phosphorylation. The respiratory chain contains 3 multisubunit complexes succinate dehydrogenase (complex II, CII), ubiquinol-cytochrome c oxidoreductase (cytochrome b-c1 complex, complex III, CIII) and cytochrome c oxidase (complex IV, CIV), that cooperate to transfer electrons derived from NADH and succinate to molecular oxygen, creating an electrochemical gradient over the inner membrane that drives transmembrane transport and the ATP synthase. Cytochrome c oxidase is the component of the respiratory chain that catalyzes the reduction of oxygen to water. Electrons originating from reduced cytochrome c in the intermembrane space (IMS) are transferred via the dinuclear copper A center (CU(A)) of subunit 2 and heme A of subunit 1 to the active site in subunit 1, a binuclear center (BNC) formed by heme A3 and copper B (CU(B)). The BNC reduces molecular oxygen to 2 water molecules using 4 electrons from cytochrome c in the IMS and 4 protons from the mitochondrial matrix. The sequence is that of Cytochrome c oxidase subunit 3 (COIII) from Anopheles quadrimaculatus (Common malaria mosquito).